The primary structure comprises 348 residues: Rhodopsin (348 aa).

The residue at position 1 (Met-1) is an N-acetylmethionine. At 1–36 (MNGTEGPNFYVPFSNKTGVVRSPFEYPQYYLAEPWQ) the chain is on the extracellular side. Asn-2 and Asn-15 each carry an N-linked (GlcNAc...) asparagine glycan. The chain crosses the membrane as a helical span at residues 37-61 (FSMLAAYMFLLIVLGFPINFLTLYV). At 62–73 (TVQHKKLRTPLN) the chain is on the cytoplasmic side. Residues 74-96 (YILLNLAVADLFMVFGGFTTTLY) traverse the membrane as a helical segment. Residues 97–110 (TSLHGYFVFGPTGC) are Extracellular-facing. Cys-110 and Cys-187 are oxidised to a cystine. The helical transmembrane segment at 111–133 (NVEGFFATLGGEIALWSLVVLAI) threads the bilayer. The 'Ionic lock' involved in activated form stabilization signature appears at 134-136 (ERY). Over 134-152 (ERYVVVCKPMSNFRFGENH) the chain is Cytoplasmic. A helical membrane pass occupies residues 153-173 (AIMGVAFTWVMALACAAPPLA). The Extracellular portion of the chain corresponds to 174 to 202 (GWSRYIPEGMQCSCGIDYYTLKPEINNES). Glu-201 contacts Zn(2+). A helical transmembrane segment spans residues 203–224 (FVIYMFVVHFAIPMIVIFFCYG). The Cytoplasmic segment spans residues 225 to 252 (QLVFTVKEAAAQQQESATTQKAEKEVTR). The chain crosses the membrane as a helical span at residues 253-274 (MVIIMVIAFLICWVPYASVAFY). Residues 275–286 (IFTHQGSDFGPI) lie on the Extracellular side of the membrane. Gln-279 provides a ligand contact to Zn(2+). The chain crosses the membrane as a helical span at residues 287-308 (FMTLPAFFAKSSSIYNPVIYIM). Lys-296 carries the post-translational modification N6-(retinylidene)lysine. Over 309–348 (MNKQFRNCMITTLCCGKNPLGDDEASASASKTETSQVAPA) the chain is Cytoplasmic. S-palmitoyl cysteine attachment occurs at residues Cys-322 and Cys-323. The segment at 330–348 (DDEASASASKTETSQVAPA) is interaction with SAG. A phosphoserine mark is found at Ser-334 and Ser-338. Thr-340 and Thr-342 each carry phosphothreonine. At Ser-343 the chain carries Phosphoserine.

Belongs to the G-protein coupled receptor 1 family. Opsin subfamily. In terms of assembly, homodimer. May form a complex composed of RHO, GRK1 and RCVRN in a Ca(2+)-dependent manner; RCVRN prevents the interaction between GRK1 and RHO. Interacts with GRK1. Interacts (phosphorylated form) with SAG. Interacts with GNAT1. Interacts with GNAT3. SAG and G-proteins compete for a common binding site. Interacts with PRCD; the interaction promotes PRCD stability. Forms a complex with ASAP1 and ARF4. Forms a complex with ASAP1, RAB11A, Rabin8/RAB3IP, ARF4 and RAB11FIP3; the complex regulates Golgi-to-cilia rhodopsin/RHO transport in photoreceptors. Post-translationally, phosphorylated on some or all of the serine and threonine residues present in the C-terminal region. Contains one covalently linked retinal chromophore. Upon light absorption, the covalently bound 11-cis-retinal is converted to all-trans-retinal. After hydrolysis of the Schiff base and release of the covalently bound all-trans-retinal, active rhodopsin is regenerated by binding of a fresh molecule of 11-cis-retinal.

The protein localises to the membrane. The protein resides in the cell projection. Its subcellular location is the cilium. It is found in the photoreceptor outer segment. Photoreceptor required for image-forming vision at low light intensity. Required for photoreceptor cell viability after birth. Light-induced isomerization of 11-cis to all-trans retinal triggers a conformational change that activates signaling via G-proteins. Subsequent receptor phosphorylation mediates displacement of the bound G-protein alpha subunit by the arrestin SAG and terminates signaling. This is Rhodopsin (RHO) from Canis lupus familiaris (Dog).